We begin with the raw amino-acid sequence, 715 residues long: Fatty acid oxidation complex subunit alpha (715 aa).

The tract at residues 1 to 190 (MIYEGKAITV…KVGAVDAVVA (190 aa)) is enoyl-CoA hydratase/isomerase. Residue Asp297 participates in substrate binding. The 3-hydroxyacyl-CoA dehydrogenase stretch occupies residues 312-715 (KDVKQAAVLG…MAKNGQSFFG (404 aa)). NAD(+) is bound by residues Met325, Asp344, 401 to 403 (VVE), Lys408, and Ser430. His451 (for 3-hydroxyacyl-CoA dehydrogenase activity) is an active-site residue. Residue Asn454 participates in NAD(+) binding. Positions 501 and 660 each coordinate substrate.

This sequence in the N-terminal section; belongs to the enoyl-CoA hydratase/isomerase family. In the C-terminal section; belongs to the 3-hydroxyacyl-CoA dehydrogenase family. In terms of assembly, heterotetramer of two alpha chains (FadB) and two beta chains (FadA).

The catalysed reaction is a (3S)-3-hydroxyacyl-CoA + NAD(+) = a 3-oxoacyl-CoA + NADH + H(+). It catalyses the reaction a (3S)-3-hydroxyacyl-CoA = a (2E)-enoyl-CoA + H2O. The enzyme catalyses a 4-saturated-(3S)-3-hydroxyacyl-CoA = a (3E)-enoyl-CoA + H2O. It carries out the reaction (3S)-3-hydroxybutanoyl-CoA = (3R)-3-hydroxybutanoyl-CoA. The catalysed reaction is a (3Z)-enoyl-CoA = a 4-saturated (2E)-enoyl-CoA. It catalyses the reaction a (3E)-enoyl-CoA = a 4-saturated (2E)-enoyl-CoA. Its pathway is lipid metabolism; fatty acid beta-oxidation. In terms of biological role, involved in the aerobic and anaerobic degradation of long-chain fatty acids via beta-oxidation cycle. Catalyzes the formation of 3-oxoacyl-CoA from enoyl-CoA via L-3-hydroxyacyl-CoA. It can also use D-3-hydroxyacyl-CoA and cis-3-enoyl-CoA as substrate. This Pseudomonas fluorescens (strain Pf0-1) protein is Fatty acid oxidation complex subunit alpha.